Consider the following 141-residue polypeptide: Hemoglobin subunit alpha (141 aa).

The Globin domain maps to 1-141 (VLSSADKNNI…VSTVLTSKYR (141 aa)). Serine 3 carries the post-translational modification Phosphoserine. An N6-succinyllysine mark is found at lysine 7 and lysine 11. Lysine 16 bears the N6-acetyllysine; alternate mark. Lysine 16 bears the N6-succinyllysine; alternate mark. Phosphotyrosine is present on tyrosine 24. Phosphoserine is present on serine 35. N6-succinyllysine is present on lysine 40. A Phosphoserine modification is found at serine 49. Histidine 58 is a binding site for O2. Histidine 87 serves as a coordination point for heme b. At serine 102 the chain carries Phosphoserine. Residues threonine 108, threonine 134, and threonine 137 each carry the phosphothreonine modification. A Phosphoserine modification is found at serine 138.

It belongs to the globin family. In terms of assembly, heterotetramer of two alpha chains and two beta chains. As to expression, red blood cells.

Involved in oxygen transport from the lung to the various peripheral tissues. Its function is as follows. Hemopressin acts as an antagonist peptide of the cannabinoid receptor CNR1. Hemopressin-binding efficiently blocks cannabinoid receptor CNR1 and subsequent signaling. This Paguma larvata (Masked palm civet) protein is Hemoglobin subunit alpha (HBA).